The sequence spans 1500 residues: Myosin-8 (1500 aa).

A Myosin N-terminal SH3-like domain is found at 8-57 (AVGSHVWVEDPDEAWLDGEVVEINGDQIKVLCASGKQVVVKDSNIYPKDV). In terms of domain architecture, Myosin motor spans 62 to 732 (SGVEDMTRLA…QMADLDTRRT (671 aa)). ATP is bound by residues 156-163 (GESGAGKT) and 210-218 (NNNSSRFGK). Actin-binding stretches follow at residues 496-530 (LIEK…YQTY), 532-555 (NHKR…AGDV), 590-613 (FPPV…KQQL), and 613-635 (LVSL…KPNN). 6 consecutive IQ domains span residues 735 to 764 (LGRS…SATQ), 758 to 787 (LRIS…EAAA), 783 to 812 (REAA…ATIL), 806 to 835 (LFSA…TKAA), 831 to 860 (QTKA…AAIT), and 854 to 883 (LKKA…AARE). The stretch at 884-1049 (TGALQEAKNK…TEKQIMLQQT (166 aa)) forms a coiled coil. The region spanning 1146–1447 (DRLIEMIGSA…ISSMRALMTE (302 aa)) is the Dilute domain.

This sequence belongs to the TRAFAC class myosin-kinesin ATPase superfamily. Myosin family. Plant myosin class XI subfamily. In terms of assembly, homodimer.

It is found in the cytoplasm. In terms of biological role, myosin heavy chain that is required for the cell cycle-regulated transport of various organelles and proteins for their segregation. Functions by binding with its tail domain to receptor proteins on organelles and exerting force with its N-terminal motor domain against actin filaments, thereby transporting its cargo along polarized actin cables. In Arabidopsis thaliana (Mouse-ear cress), this protein is Myosin-8 (XI-B).